A 255-amino-acid chain; its full sequence is Zinc import ATP-binding protein ZnuC (255 aa).

One can recognise an ABC transporter domain in the interval 5–220 (VALEHIAVAF…PDFIAMFGYR (216 aa)).

This sequence belongs to the ABC transporter superfamily. Zinc importer (TC 3.A.1.15.5) family. The complex is composed of two ATP-binding proteins (ZnuC), two transmembrane proteins (ZnuB) and a solute-binding protein (ZnuA).

The protein resides in the cell inner membrane. It catalyses the reaction Zn(2+)(out) + ATP(in) + H2O(in) = Zn(2+)(in) + ADP(in) + phosphate(in) + H(+)(in). In terms of biological role, part of the ABC transporter complex ZnuABC involved in zinc import. Responsible for energy coupling to the transport system. In Sodalis glossinidius (strain morsitans), this protein is Zinc import ATP-binding protein ZnuC.